Consider the following 261-residue polypeptide: Ribosomal RNA small subunit methyltransferase A (261 aa).

S-adenosyl-L-methionine contacts are provided by Asn11, Leu13, Gly38, Glu59, Asp84, and Ser106.

This sequence belongs to the class I-like SAM-binding methyltransferase superfamily. rRNA adenine N(6)-methyltransferase family. RsmA subfamily.

Its subcellular location is the cytoplasm. It catalyses the reaction adenosine(1518)/adenosine(1519) in 16S rRNA + 4 S-adenosyl-L-methionine = N(6)-dimethyladenosine(1518)/N(6)-dimethyladenosine(1519) in 16S rRNA + 4 S-adenosyl-L-homocysteine + 4 H(+). Its function is as follows. Specifically dimethylates two adjacent adenosines (A1518 and A1519) in the loop of a conserved hairpin near the 3'-end of 16S rRNA in the 30S particle. May play a critical role in biogenesis of 30S subunits. The chain is Ribosomal RNA small subunit methyltransferase A from Wigglesworthia glossinidia brevipalpis.